The following is a 347-amino-acid chain: Phosphate acyltransferase (347 aa).

Belongs to the PlsX family. Homodimer. Probably interacts with PlsY.

The protein resides in the cytoplasm. It catalyses the reaction a fatty acyl-[ACP] + phosphate = an acyl phosphate + holo-[ACP]. It participates in lipid metabolism; phospholipid metabolism. Its function is as follows. Catalyzes the reversible formation of acyl-phosphate (acyl-PO(4)) from acyl-[acyl-carrier-protein] (acyl-ACP). This enzyme utilizes acyl-ACP as fatty acyl donor, but not acyl-CoA. The protein is Phosphate acyltransferase of Methylobacillus flagellatus (strain ATCC 51484 / DSM 6875 / VKM B-1610 / KT).